The following is a 258-amino-acid chain: F-box/SPRY domain-containing protein 1 (258 aa).

Positions 6 to 54 constitute an F-box domain; sequence TEYAPDIPDNVLELIFSYLKLQDLRNCALVCKSWHRFLSDENNEVWRAQ. Residues 64 to 256 enclose the B30.2/SPRY domain; that stretch reads FKTDLLSVVP…ISMVYLGPPL (193 aa).

The protein belongs to the FBXO45/Fsn family. Component of an E3 ubiquitin ligase complex composed of hiw and Fsn.

The protein localises to the synapse. The protein operates within protein modification; protein ubiquitination. Functionally, required in the presynaptic motoneuron to down-regulate the levels of wnd and restrain synaptic terminal growth at the neuromuscular junction (NMJ). The sequence is that of F-box/SPRY domain-containing protein 1 from Culex quinquefasciatus (Southern house mosquito).